The following is an 878-amino-acid chain: Alanine--tRNA ligase (878 aa).

Positions 567, 571, 669, and 673 each coordinate Zn(2+).

This sequence belongs to the class-II aminoacyl-tRNA synthetase family. The cofactor is Zn(2+).

It localises to the cytoplasm. It carries out the reaction tRNA(Ala) + L-alanine + ATP = L-alanyl-tRNA(Ala) + AMP + diphosphate. Its function is as follows. Catalyzes the attachment of alanine to tRNA(Ala) in a two-step reaction: alanine is first activated by ATP to form Ala-AMP and then transferred to the acceptor end of tRNA(Ala). Also edits incorrectly charged Ser-tRNA(Ala) and Gly-tRNA(Ala) via its editing domain. The polypeptide is Alanine--tRNA ligase (Rickettsia canadensis (strain McKiel)).